Here is a 99-residue protein sequence, read N- to C-terminus: EPIDERMAL PATTERNING FACTOR-like protein 8 (99 aa).

The first 35 residues, 1–35, serve as a signal peptide directing secretion; it reads MDSSRKYKRCGFGAALFVANIFFSLLSLHCISGAH. 3 disulfide bridges follow: cysteine 53/cysteine 90, cysteine 57/cysteine 63, and cysteine 60/cysteine 92.

This sequence belongs to the plant cysteine rich small secretory peptide family. Epidermal patterning factor subfamily.

The protein resides in the secreted. Controls stomatal patterning. The protein is EPIDERMAL PATTERNING FACTOR-like protein 8 of Arabidopsis thaliana (Mouse-ear cress).